The primary structure comprises 146 residues: Hemoglobin subunit beta (146 aa).

Position 1 is an N-acetylvaline (Val-1). The 145-residue stretch at 2-146 (HLTPEEKTAV…VANALAHKYH (145 aa)) folds into the Globin domain. At Thr-12 the chain carries Phosphothreonine. Ser-44 carries the phosphoserine modification. The residue at position 59 (Lys-59) is an N6-acetyllysine. Residue His-63 participates in heme b binding. Lys-82 is subject to N6-acetyllysine. His-92 is a heme b binding site. The residue at position 93 (Cys-93) is an S-nitrosocysteine. Position 144 is an N6-acetyllysine (Lys-144).

This sequence belongs to the globin family. Heterotetramer of two alpha chains and two beta chains. In terms of tissue distribution, red blood cells.

Its function is as follows. Involved in oxygen transport from the lung to the various peripheral tissues. The protein is Hemoglobin subunit beta (HBB) of Chlorocebus aethiops (Green monkey).